The primary structure comprises 420 residues: Serine palmitoyltransferase (420 aa).

Residues 1–21 (MKHNLQDNLQGEQMANTNSNG) are compositionally biased toward polar residues. The segment at 1-25 (MKHNLQDNLQGEQMANTNSNGGKKP) is disordered. Residues 132–133 (GM), His233, Thr261, and Ser263 each bind pyridoxal 5'-phosphate. N6-(pyridoxal phosphate)lysine is present on Lys264.

Belongs to the class-II pyridoxal-phosphate-dependent aminotransferase family. As to quaternary structure, homodimer. Pyridoxal 5'-phosphate is required as a cofactor.

The protein resides in the cytoplasm. It localises to the cell inner membrane. It carries out the reaction L-serine + hexadecanoyl-CoA + H(+) = 3-oxosphinganine + CO2 + CoA. It participates in lipid metabolism; sphingolipid metabolism. With respect to regulation, significantly inhibited by palmitoyl-CoA concentrations greater than 100 uM. In terms of biological role, catalyzes the condensation of L-serine with palmitoyl-CoA (hexadecanoyl-CoA) to produce 3-oxosphinganine. In Bacteriovorax stolpii (Bdellovibrio stolpii), this protein is Serine palmitoyltransferase.